We begin with the raw amino-acid sequence, 468 residues long: uncharacterized protein (468 aa).

The N-terminal stretch at 1–19 (MRVLSVLLVALTVAGSAYS) is a signal peptide. Asn-86 and Asn-334 each carry an N-linked (GlcNAc...) asparagine glycan. Positions 401-421 (NPSTNLPETSPPTEQPTAPPA) are disordered. Over residues 409 to 421 (TSPPTEQPTAPPA) the composition is skewed to pro residues. A glycan (N-linked (GlcNAc...) asparagine) is linked at Asn-435. Asn-444 carries GPI-like-anchor amidated asparagine lipidation. The propeptide at 445–468 (SASSIEMSKLVVAILSLFILAFFH) is removed in mature form.

It localises to the cell membrane. This is an uncharacterized protein from Dictyostelium discoideum (Social amoeba).